Here is a 228-residue protein sequence, read N- to C-terminus: U1 small nuclear ribonucleoprotein C (228 aa).

The Matrin-type zinc finger occupies 4–36 (YYCEYCDIYLTHSSPVGRRQHVQGRKHISAKIE). Positions 179–190 (LVKDNPNEERNG) are enriched in basic and acidic residues. Positions 179-228 (LVKDNPNEERNGDSAIANQPSTMHHEEDQDDPANATGGTANNNDNVSINA) are disordered. The segment covering 211–221 (ANATGGTANNN) has biased composition (low complexity).

The protein belongs to the U1 small nuclear ribonucleoprotein C family. In terms of assembly, U1 snRNP is composed of the 7 core Sm proteins B/B', D1, D2, D3, E, F and G that assemble in a heptameric protein ring on the Sm site of the small nuclear RNA to form the core snRNP, and at least 3 U1 snRNP-specific proteins U1-70K, U1-A and U1-C. U1-C interacts with U1 snRNA and the 5' splice-site region of the pre-mRNA.

The protein localises to the nucleus. In terms of biological role, component of the spliceosomal U1 snRNP, which is essential for recognition of the pre-mRNA 5' splice-site and the subsequent assembly of the spliceosome. U1-C is directly involved in initial 5' splice-site recognition for both constitutive and regulated alternative splicing. The interaction with the 5' splice-site seems to precede base-pairing between the pre-mRNA and the U1 snRNA. Stimulates commitment or early (E) complex formation by stabilizing the base pairing of the 5' end of the U1 snRNA and the 5' splice-site region. The polypeptide is U1 small nuclear ribonucleoprotein C (Plasmodium knowlesi (strain H)).